A 188-amino-acid polypeptide reads, in one-letter code: UPF0301 protein Tcr_1827 (188 aa).

The protein belongs to the UPF0301 (AlgH) family.

This is UPF0301 protein Tcr_1827 from Hydrogenovibrio crunogenus (strain DSM 25203 / XCL-2) (Thiomicrospira crunogena).